A 201-amino-acid chain; its full sequence is MKKVLLTVCAIALFGSQAAWADARQDLQQRLNKVNSFQANFSQTVTSNEGALIQKGEGHLKVQRPDLFNWQMTAPDESTLISDGKTLWFYNPFVEQVTATWLESATTNTPFMLIARNDSKEWQNYDVKQNGDRFELTPKTENNLKHFSITVSPNGQIQQFAATEQDGQVSQYQLTAQKVAPIDASAFRFTPPAGVTVDDQR.

Positions 1–21 (MKKVLLTVCAIALFGSQAAWA) are cleaved as a signal peptide.

Belongs to the LolA family. As to quaternary structure, monomer.

Its subcellular location is the periplasm. Functionally, participates in the translocation of lipoproteins from the inner membrane to the outer membrane. Only forms a complex with a lipoprotein if the residue after the N-terminal Cys is not an aspartate (The Asp acts as a targeting signal to indicate that the lipoprotein should stay in the inner membrane). In Proteus mirabilis (strain HI4320), this protein is Outer-membrane lipoprotein carrier protein.